Reading from the N-terminus, the 241-residue chain is Probable histone-lysine N-methyltransferase set-23 (241 aa).

Residues 25–85 (QGCDCETQCS…SCRNKVVQNG (61 aa)) form the Pre-SET domain. 9 residues coordinate Zn(2+): Cys-27, Cys-29, Cys-33, Cys-39, Cys-41, Cys-64, Cys-68, Cys-70, and Cys-77. Positions 88 to 210 (KKLKIFSTSE…VGEELSYDYG (123 aa)) constitute an SET domain. S-adenosyl-L-methionine is bound by residues 98 to 100 (KGD), Asp-138, Tyr-140, Arg-167, and 170 to 171 (NH). Zn(2+) is bound by residues Cys-173, Cys-222, Cys-224, and Cys-229. The 17-residue stretch at 218–234 (NRKLCLCRSENCRKYLP) folds into the Post-SET domain.

The protein belongs to the class V-like SAM-binding methyltransferase superfamily. Histone-lysine methyltransferase family. Suvar3-9 subfamily.

The protein resides in the nucleus. It localises to the chromosome. It carries out the reaction L-lysyl-[histone] + S-adenosyl-L-methionine = N(6)-methyl-L-lysyl-[histone] + S-adenosyl-L-homocysteine + H(+). In terms of biological role, probable histone methyltransferase required for embryonic development. The protein is Probable histone-lysine N-methyltransferase set-23 of Caenorhabditis briggsae.